The following is a 291-amino-acid chain: Omega-amidase NIT3 (291 aa).

The 254-residue stretch at 11–264 (IKVALVQLSG…EEIIYAELDP (254 aa)) folds into the CN hydrolase domain. Threonine 34 is subject to Phosphothreonine. The active-site Proton acceptor is the glutamate 53. Lysine 128 functions as the Proton donor in the catalytic mechanism. The active-site Nucleophile is the cysteine 169.

Belongs to the carbon-nitrogen hydrolase superfamily. NIT1/NIT2 family. In terms of assembly, homodimer.

It carries out the reaction a monoamide of a dicarboxylate + H2O = a dicarboxylate + NH4(+). Functionally, possesses omega-amidase activity. The role of omega-amidase is to remove potentially toxic intermediates by converting 2-oxoglutaramate and 2-oxosuccinamate to biologically useful 2-oxoglutarate and oxaloacetate, respectively. In Saccharomyces cerevisiae (strain ATCC 204508 / S288c) (Baker's yeast), this protein is Omega-amidase NIT3 (NIT3).